A 277-amino-acid polypeptide reads, in one-letter code: Acetyl-coenzyme A carboxylase carboxyl transferase subunit beta (277 aa).

Positions 25–277 (LVRRCPVCHT…DLLRLHKGES (253 aa)) constitute a CoA carboxyltransferase N-terminal domain. Residues C29, C32, C47, and C50 each coordinate Zn(2+). Residues 29–50 (CPVCHTTFLTDHWEPTRLCPAC) form a C4-type zinc finger.

Belongs to the AccD/PCCB family. As to quaternary structure, acetyl-CoA carboxylase is a heterohexamer composed of biotin carboxyl carrier protein (AccB), biotin carboxylase (AccC) and two subunits each of ACCase subunit alpha (AccA) and ACCase subunit beta (AccD). The cofactor is Zn(2+).

It localises to the cytoplasm. It carries out the reaction N(6)-carboxybiotinyl-L-lysyl-[protein] + acetyl-CoA = N(6)-biotinyl-L-lysyl-[protein] + malonyl-CoA. It functions in the pathway lipid metabolism; malonyl-CoA biosynthesis; malonyl-CoA from acetyl-CoA: step 1/1. Component of the acetyl coenzyme A carboxylase (ACC) complex. Biotin carboxylase (BC) catalyzes the carboxylation of biotin on its carrier protein (BCCP) and then the CO(2) group is transferred by the transcarboxylase to acetyl-CoA to form malonyl-CoA. This Levilactobacillus brevis (strain ATCC 367 / BCRC 12310 / CIP 105137 / JCM 1170 / LMG 11437 / NCIMB 947 / NCTC 947) (Lactobacillus brevis) protein is Acetyl-coenzyme A carboxylase carboxyl transferase subunit beta.